The following is an 833-amino-acid chain: Ventricular zone-expressed PH domain-containing protein homolog 1 (833 aa).

Residues 201-319 form an interaction with TGFBR1 region; sequence TELLALMSQL…TYLVSQLANM (119 aa). The disordered stretch occupies residues 458 to 505; that stretch reads KGVGSDDGEDENRGDIPASISLSEIDPLGQGNDKLPFKTDTERSQLGE. Basic and acidic residues predominate over residues 492–502; it reads LPFKTDTERSQ. Residues 663-833 are interaction with TGFBR1; the sequence is ESTFPQQKDL…RESREVTTYL (171 aa). The PH domain occupies 716–819; that stretch reads QPLIEGKLKE…WLQCINVAVA (104 aa).

The protein belongs to the MELT/VEPH family. Interacts with TGFBR1.

The protein localises to the cell membrane. Its function is as follows. Interacts with TGF-beta receptor type-1 (TGFBR1) and inhibits dissociation of activated SMAD2 from TGFBR1, impeding its nuclear accumulation and resulting in impaired TGF-beta signaling. May also affect FOXO, Hippo and Wnt signaling. The protein is Ventricular zone-expressed PH domain-containing protein homolog 1 (VEPH1) of Homo sapiens (Human).